The sequence spans 533 residues: Calcium/calmodulin-dependent protein kinase type II subunit delta (533 aa).

N-acetylalanine is present on A2. Positions 14 to 272 constitute a Protein kinase domain; that stretch reads YQLFEELGKG…ASEALKHPWI (259 aa). ATP contacts are provided by residues 20-28 and K43; that span reads LGKGAFSVV. Catalysis depends on D136, which acts as the Proton acceptor. The tract at residues 283-292 is autoinhibitory domain; sequence HRQETVDCLK. The residue at position 287 (T287) is a Phosphothreonine; by autocatalysis. The interval 291 to 301 is calmodulin-binding; that stretch reads LKKFNARRKLK. 2 positions are modified to phosphothreonine; by autocatalysis: T306 and T307. The residue at position 315 (S315) is a Phosphoserine. K318 carries the N6-acetyllysine modification. Phosphoserine is present on residues S319 and S364. The segment at 337–375 is disordered; that stretch reads TSPKENIPTPALEPQTTVIHNPDGNKESTESSNTTIEDE. T365 is subject to Phosphothreonine. Residue S367 is modified to Phosphoserine. T370 and T371 each carry phosphothreonine. Residues S438, S524, and S528 each carry the phosphoserine modification.

The protein belongs to the protein kinase superfamily. CAMK Ser/Thr protein kinase family. CaMK subfamily. CAMK2 is composed of 4 different chains: alpha (CAMK2A), beta (CAMK2B), gamma (CAMK2G), and delta (CAMK2D). The different isoforms assemble into homo- or heteromultimeric holoenzymes composed of 12 subunits with two hexameric rings stacked one on top of the other. Interacts with RRAD and CACNB2. Post-translationally, autophosphorylation of Thr-287 following activation by Ca(2+)/calmodulin. Phosphorylation of Thr-287 locks the kinase into an activated state. Expressed in liver.

The protein localises to the cell membrane. It localises to the sarcolemma. The protein resides in the sarcoplasmic reticulum membrane. It catalyses the reaction L-seryl-[protein] + ATP = O-phospho-L-seryl-[protein] + ADP + H(+). The catalysed reaction is L-threonyl-[protein] + ATP = O-phospho-L-threonyl-[protein] + ADP + H(+). Its activity is regulated as follows. Activated by Ca(2+)/calmodulin. Binding of calmodulin results in conformational change that relieves intrasteric autoinhibition and allows autophosphorylation of Thr-287 which turns the kinase in a constitutively active form and confers to the kinase a Ca(2+)-independent activity. Functionally, calcium/calmodulin-dependent protein kinase involved in the regulation of Ca(2+) homeostatis and excitation-contraction coupling (ECC) in heart by targeting ion channels, transporters and accessory proteins involved in Ca(2+) influx into the myocyte, Ca(2+) release from the sarcoplasmic reticulum (SR), SR Ca(2+) uptake and Na(+) and K(+) channel transport. Targets also transcription factors and signaling molecules to regulate heart function. In its activated form, is involved in the pathogenesis of dilated cardiomyopathy and heart failure. Contributes to cardiac decompensation and heart failure by regulating SR Ca(2+) release via direct phosphorylation of RYR2 Ca(2+) channel on 'Ser-2808'. In the nucleus, phosphorylates the MEF2 repressor HDAC4, promoting its nuclear export and binding to 14-3-3 protein, and expression of MEF2 and genes involved in the hypertrophic program. Is essential for left ventricular remodeling responses to myocardial infarction. In pathological myocardial remodeling acts downstream of the beta adrenergic receptor signaling cascade to regulate key proteins involved in ECC. Regulates Ca(2+) influx to myocytes by binding and phosphorylating the L-type Ca(2+) channel subunit beta-2 CACNB2. In addition to Ca(2+) channels, can target and regulate the cardiac sarcolemmal Na(+) channel Nav1.5/SCN5A and the K+ channel Kv4.3/KCND3, which contribute to arrhythmogenesis in heart failure. Phosphorylates phospholamban (PLN/PLB), an endogenous inhibitor of SERCA2A/ATP2A2, contributing to the enhancement of SR Ca(2+) uptake that may be important in frequency-dependent acceleration of relaxation (FDAR) and maintenance of contractile function during acidosis. May participate in the modulation of skeletal muscle function in response to exercise, by regulating SR Ca(2+) transport through phosphorylation of PLN/PLB and triadin, a ryanodine receptor-coupling factor. In response to interferon-gamma (IFN-gamma) stimulation, catalyzes phosphorylation of STAT1, stimulating the JAK-STAT signaling pathway. This chain is Calcium/calmodulin-dependent protein kinase type II subunit delta (CAMK2D), found in Oryctolagus cuniculus (Rabbit).